Reading from the N-terminus, the 141-residue chain is Hemoglobin subunit alpha (141 aa).

The region spanning 1-141 (VLSPADKTNI…VSTVLVSKYR (141 aa)) is the Globin domain. Phosphoserine is present on Ser-3. An N6-succinyllysine modification is found at Lys-7. Thr-8 carries the phosphothreonine modification. N6-succinyllysine is present on Lys-11. N6-acetyllysine; alternate is present on Lys-16. N6-succinyllysine; alternate is present on Lys-16. Tyr-24 carries the post-translational modification Phosphotyrosine. A Phosphoserine modification is found at Ser-35. Lys-40 is modified (N6-succinyllysine). A Phosphoserine modification is found at Ser-49. His-58 is an O2 binding site. His-87 lines the heme b pocket. Ser-102 is modified (phosphoserine). Thr-108 is subject to Phosphothreonine. Phosphoserine is present on residues Ser-124 and Ser-131. Thr-134 is modified (phosphothreonine). At Ser-138 the chain carries Phosphoserine.

This sequence belongs to the globin family. Heterotetramer of two alpha chains and two beta chains. Red blood cells.

Involved in oxygen transport from the lung to the various peripheral tissues. Its function is as follows. Hemopressin acts as an antagonist peptide of the cannabinoid receptor CNR1. Hemopressin-binding efficiently blocks cannabinoid receptor CNR1 and subsequent signaling. This Myotis velifer (Mouse-eared bat) protein is Hemoglobin subunit alpha (HBA).